The following is a 387-amino-acid chain: MNRLRYLTAGESHGPSLTAIIEGMPANLELNEGDINRDLARRQLGYGRGGRMLIEKDKVNFTSGVRWGKTLGSPITLSIQNRDWENWGKKMSPVAEDFVEGMAITHPRPGHADLTGVIKYRQDDARNILERSSARETAARVAVGALCKKFLADLGMSVLGYVSELGGVCADASLEDYHERFALSEESPCRTFDAEAEQRMIKAIDRAKEDGDSLGGVVEVAVLGAPVGLGSYVQWDRRLDGRLAYAMMSIQAFKGVEIGLGFEAGRRPGSQVHDEIFHQGDEFVRKTNRAGGLEGGMTNGAPIIVRGAMKPIPTLYQPLQTVDFRTKDAFAAVVERSDVCAVPAAAVVAEAVVAIEMAQAMLEKFGGDAMEEVKQNLQAYGEYVQRF.

Positions 42 and 48 each coordinate NADP(+). Residues 131 to 133 (RSS), 251 to 252 (QA), Gly-295, 310 to 314 (KPIPT), and Arg-336 contribute to the FMN site.

This sequence belongs to the chorismate synthase family. Homotetramer. It depends on FMNH2 as a cofactor.

It catalyses the reaction 5-O-(1-carboxyvinyl)-3-phosphoshikimate = chorismate + phosphate. It functions in the pathway metabolic intermediate biosynthesis; chorismate biosynthesis; chorismate from D-erythrose 4-phosphate and phosphoenolpyruvate: step 7/7. Functionally, catalyzes the anti-1,4-elimination of the C-3 phosphate and the C-6 proR hydrogen from 5-enolpyruvylshikimate-3-phosphate (EPSP) to yield chorismate, which is the branch point compound that serves as the starting substrate for the three terminal pathways of aromatic amino acid biosynthesis. This reaction introduces a second double bond into the aromatic ring system. The sequence is that of Chorismate synthase from Syntrophotalea carbinolica (strain DSM 2380 / NBRC 103641 / GraBd1) (Pelobacter carbinolicus).